A 175-amino-acid chain; its full sequence is MNPYILTPDLNGEGLHIGIVRARFNEEIGQAELDACLQKLGELGVDERDIMVVTVPGALELGVALSHMAETFEFDALIALGAVIRGETYHFEVVSNEMARAISRISLETGIPVANGVLTVDTDEQAQARAAGKGGDCALVAVEMANLVAALEPEEDDEDEDEEDEDFDDEETDRR.

Residues Phe24, 58-60 (ALE), and 82-84 (AVI) each bind 5-amino-6-(D-ribitylamino)uracil. 87 to 88 (ET) is a binding site for (2S)-2-hydroxy-3-oxobutyl phosphate. Residue His90 is the Proton donor of the active site. Residue Asn115 participates in 5-amino-6-(D-ribitylamino)uracil binding. Arg129 is a (2S)-2-hydroxy-3-oxobutyl phosphate binding site. The segment at 151–175 (LEPEEDDEDEDEEDEDFDDEETDRR) is disordered. Residues 152–175 (EPEEDDEDEDEEDEDFDDEETDRR) show a composition bias toward acidic residues.

This sequence belongs to the DMRL synthase family.

The enzyme catalyses (2S)-2-hydroxy-3-oxobutyl phosphate + 5-amino-6-(D-ribitylamino)uracil = 6,7-dimethyl-8-(1-D-ribityl)lumazine + phosphate + 2 H2O + H(+). Its pathway is cofactor biosynthesis; riboflavin biosynthesis; riboflavin from 2-hydroxy-3-oxobutyl phosphate and 5-amino-6-(D-ribitylamino)uracil: step 1/2. Functionally, catalyzes the formation of 6,7-dimethyl-8-ribityllumazine by condensation of 5-amino-6-(D-ribitylamino)uracil with 3,4-dihydroxy-2-butanone 4-phosphate. This is the penultimate step in the biosynthesis of riboflavin. The polypeptide is 6,7-dimethyl-8-ribityllumazine synthase (Bordetella petrii (strain ATCC BAA-461 / DSM 12804 / CCUG 43448)).